A 350-amino-acid chain; its full sequence is RNA 3'-terminal phosphate cyclase (350 aa).

Residues Gln-107 and 290 to 294 (FLGDQ) contribute to the ATP site. His-316 (tele-AMP-histidine intermediate) is an active-site residue.

The protein belongs to the RNA 3'-terminal cyclase family. Type 1 subfamily.

It localises to the cytoplasm. The enzyme catalyses a 3'-end 3'-phospho-ribonucleotide-RNA + ATP = a 3'-end 2',3'-cyclophospho-ribonucleotide-RNA + AMP + diphosphate. Functionally, catalyzes the conversion of 3'-phosphate to a 2',3'-cyclic phosphodiester at the end of RNA. The mechanism of action of the enzyme occurs in 3 steps: (A) adenylation of the enzyme by ATP; (B) transfer of adenylate to an RNA-N3'P to produce RNA-N3'PP5'A; (C) and attack of the adjacent 2'-hydroxyl on the 3'-phosphorus in the diester linkage to produce the cyclic end product. The biological role of this enzyme is unknown but it is likely to function in some aspects of cellular RNA processing. This is RNA 3'-terminal phosphate cyclase from Gloeothece citriformis (strain PCC 7424) (Cyanothece sp. (strain PCC 7424)).